A 1170-amino-acid polypeptide reads, in one-letter code: Cellulose synthase-like protein D2 (1170 aa).

Disordered stretches follow at residues 1-48 (MASS…RRTH), 54-73 (SYSR…MSPE), and 269-295 (NEVD…EFTS). Low complexity predominate over residues 10–24 (RHSNSSRLSRMSYSG). A compositionally biased stretch (gly residues) spans 273–288 (NGGGGGGGGGLGGGDG). Transmembrane regions (helical) follow at residues 311-331 (VLSP…LFLA) and 341-361 (AMWL…SWLL). Asp441 is a catalytic residue. A coiled-coil region spans residues 527-551 (HAREEIKAMKRQREAALDDVVEAVK). Asp873 is a catalytic residue. Transmembrane regions (helical) follow at residues 955 to 975 (IFLI…QFIV), 981 to 1001 (TFLT…VLEI), 1027 to 1047 (LAAV…SFTL), 1070 to 1090 (SLMI…AVGF), 1104 to 1124 (LLGG…FAKG), and 1134 to 1154 (TIVF…WVAI).

The protein belongs to the glycosyltransferase 2 family. Plant cellulose synthase-like D subfamily.

The protein resides in the golgi apparatus membrane. Its function is as follows. Thought to be a Golgi-localized beta-glycan synthase that polymerize the backbones of noncellulosic polysaccharides (hemicelluloses) of plant cell wall. The protein is Cellulose synthase-like protein D2 (CSLD2) of Oryza sativa subsp. japonica (Rice).